Here is a 567-residue protein sequence, read N- to C-terminus: Organic cation transporter-like protein (567 aa).

The Cytoplasmic segment spans residues 1–21; sequence MGYDEAIIHLGDFGRYQKIIY. Residues 22-42 form a helical membrane-spanning segment; the sequence is FLICLTSIPVAFHKLAGVFLL. Residues 43–127 lie on the Extracellular side of the membrane; it reads AKPDFRCALP…TEWNLVCGRD (85 aa). Residues asparagine 55, asparagine 67, asparagine 89, and asparagine 97 are each glycosylated (N-linked (GlcNAc...) asparagine). The chain crosses the membrane as a helical span at residues 128–148; that stretch reads FMAATSDSLFMLGVLLGSIVF. Residues 149–158 are Cytoplasmic-facing; the sequence is GQLSDKYGRK. A helical membrane pass occupies residues 159-179; sequence PILFASLVIQVLFGVLAGVAP. Residues 180–189 lie on the Extracellular side of the membrane; sequence EYFTYTFARL. The chain crosses the membrane as a helical span at residues 190–210; it reads MVGATTSGVFLVAYVVAMEMV. The Cytoplasmic portion of the chain corresponds to 211–219; sequence GPDKRLYAG. A helical membrane pass occupies residues 220–240; that stretch reads IFVMMFFSVGFMLTAVFAYFV. At 241 to 244 the chain is on the extracellular side; that stretch reads HDWR. The helical transmembrane segment at 245–265 threads the bilayer; sequence WLQIALTLPGLIFMFYYWIIP. The Cytoplasmic segment spans residues 266-343; the sequence is ESARWLLLKG…LFCYPNLRRK (78 aa). The interval 304-326 is disordered; sequence LDEGENSEEKAKQKLEDQELDEG. Over residues 310-320 the composition is skewed to basic and acidic residues; that stretch reads SEEKAKQKLED. Residues 344–364 traverse the membrane as a helical segment; sequence TLLIFLDWLVTSGVYYGLSWN. Topologically, residues 365–371 are extracellular; it reads TSNLGGN. The helical transmembrane segment at 372–392 threads the bilayer; that stretch reads VLLNFVISGAVEIPAYIFLLL. The Cytoplasmic portion of the chain corresponds to 393 to 400; the sequence is TLNRWGRR. Residues 401-421 traverse the membrane as a helical segment; sequence SILCGCLVMAGLSLLATVIIP. Residues 422 to 427 are Extracellular-facing; it reads QRMHTL. A helical membrane pass occupies residues 428 to 448; sequence IVACAMLGKLAITASYGTVYI. At 449–462 the chain is on the cytoplasmic side; the sequence is FSAEQFPTVVRNVA. A helical membrane pass occupies residues 463 to 483; sequence LGAASMVARISGMMAPFLNFL. Topologically, residues 484–489 are extracellular; that stretch reads ATIWKP. The chain crosses the membrane as a helical span at residues 490 to 510; the sequence is LPLLICGSLTLVAGLLSLLLP. At 511–567 the chain is on the cytoplasmic side; sequence ETHNKPMLETIADGERFGKKTKADVYLETGQELRAPEAQPLKGSGETNGSTIANGHK. The tract at residues 546–567 is disordered; it reads PEAQPLKGSGETNGSTIANGHK. Residues 555–567 show a composition bias toward polar residues; it reads GETNGSTIANGHK.

Belongs to the major facilitator (TC 2.A.1) superfamily. Organic cation transporter (TC 2.A.1.19) family.

The protein localises to the membrane. Its function is as follows. Probably transports organic cations. The polypeptide is Organic cation transporter-like protein (Orct2) (Drosophila melanogaster (Fruit fly)).